Consider the following 502-residue polypeptide: Putative diacyglycerol O-acyltransferase MT1809 (502 aa).

The Proton acceptor role is filled by His174.

This sequence belongs to the long-chain O-acyltransferase family.

The enzyme catalyses an acyl-CoA + a 1,2-diacyl-sn-glycerol = a triacyl-sn-glycerol + CoA. It participates in glycerolipid metabolism; triacylglycerol biosynthesis. This is Putative diacyglycerol O-acyltransferase MT1809 from Mycobacterium tuberculosis (strain CDC 1551 / Oshkosh).